The sequence spans 476 residues: Protein transport protein Sec61 subunit alpha (476 aa).

The Cytoplasmic segment spans residues 2 to 33 (GIKFLEFIKPFCAVLPEIQKPERKIQFREKVL). A helical membrane pass occupies residues 34 to 53 (WTAITLFIFLVCCQIPLFGI). Over 54–76 (MSSDSADPFYWMRVILASNRGTL) the chain is Lumenal. Residues 77-96 (MELGISPIVTSGLIMQLLAG) form a helical membrane-spanning segment. Residues 97 to 117 (AKIIEVGDTPKDRALFNGAQK) are Cytoplasmic-facing. A helical membrane pass occupies residues 118–138 (LFGMIITIGQAIVYVMTGMYG). Residues 139-144 (DPSEMG) lie on the Lumenal side of the membrane. Residues 145–165 (AGICLLIIIQLFVAGLIVLLL) traverse the membrane as a helical segment. The Cytoplasmic portion of the chain corresponds to 166 to 172 (DELLQKG). Residues 173–193 (YGLGSGISLFIATNICETIVW) form a helical membrane-spanning segment. The Lumenal portion of the chain corresponds to 194-240 (KAFSPTTVNTGRGTEFEGAIIALFHLLATRTDKVRALREAFYRQNLP). Residues 241–261 (NILNLIATVFVFAVVIYFQGF) form a helical membrane-spanning segment. Topologically, residues 262–288 (RVDLPIKSARYRGQYNTYPIKLFYTSN) are cytoplasmic. A helical membrane pass occupies residues 289–309 (IPIILQSALVSNLYVISQMLS). At 310-354 (TRFSGNFLVNLLGTWSDATSGGPARAYPVAGLCYYLSPPESFGSV) the chain is on the lumenal side. A helical transmembrane segment spans residues 355–375 (LDDPVHAAIYIVFMLGSCAFF). Residues 376–420 (SKTWIEVSGSSAKDVAKQLKEQQMVMRGHRETSMVHELNRYIPTA) are Cytoplasmic-facing. The helical transmembrane segment at 421 to 441 (AAFGGLCIGGLSVMADFLGAI) threads the bilayer. Residues 442–445 (GSGT) lie on the Lumenal side of the membrane. The chain crosses the membrane as a helical span at residues 446–462 (GILLAVTIIYQYFEIFV). The Cytoplasmic segment spans residues 463–476 (KEQSEMGSMGALLF).

The protein belongs to the SecY/SEC61-alpha family. As to quaternary structure, the SEC61 channel-forming translocon complex consists of channel-forming core components SEC61A1, SEC61B and SEC61G and different auxiliary components such as SEC62 and SEC63. The SEC61 channel associates with the multi-pass translocon (MPT) complex.

It localises to the endoplasmic reticulum membrane. Its function is as follows. Component of SEC61 channel-forming translocon complex that mediates transport of signal peptide-containing precursor polypeptides across the endoplasmic reticulum (ER). Forms a ribosome receptor and a gated pore in the ER membrane, both functions required for cotranslational translocation of nascent polypeptides. May cooperate with auxiliary protein SEC62, SEC63 and HSPA5/BiP to enable post-translational transport of small presecretory proteins. The SEC61 channel is also involved in ER membrane insertion of transmembrane proteins: it mediates membrane insertion of the first few transmembrane segments of proteins, while insertion of subsequent transmembrane regions of multi-pass membrane proteins is mediated by the multi-pass translocon (MPT) complex. The polypeptide is Protein transport protein Sec61 subunit alpha (sec61a) (Notothenia angustata (Rockcod)).